A 100-amino-acid polypeptide reads, in one-letter code: EKC/KEOPS complex subunit GON7 (100 aa).

Residue Met1 is modified to N-acetylmethionine. The disordered stretch occupies residues Ala61–Ser100. Acidic residues predominate over residues Pro64–Asn81.

Component of the EKC/KEOPS complex composed of at least GON7, TP53RK, TPRKB, OSGEP and LAGE3; the whole complex dimerizes.

The protein resides in the nucleus. In terms of biological role, component of the EKC/KEOPS complex that is required for the formation of a threonylcarbamoyl group on adenosine at position 37 (t(6)A37) in tRNAs that read codons beginning with adenine. The complex is probably involved in the transfer of the threonylcarbamoyl moiety of threonylcarbamoyl-AMP (TC-AMP) to the N6 group of A37. GON7 plays a supporting role to the catalytic subunit OSGEP in the complex. The sequence is that of EKC/KEOPS complex subunit GON7 from Homo sapiens (Human).